Here is a 143-residue protein sequence, read N- to C-terminus: S-adenosylmethionine decarboxylase proenzyme (143 aa).

Serine 66 (schiff-base intermediate with substrate; via pyruvic acid) is an active-site residue. A Pyruvic acid (Ser); by autocatalysis modification is found at serine 66. Residue histidine 71 is the Proton acceptor; for processing activity of the active site. Residue cysteine 86 is the Proton donor; for catalytic activity of the active site.

This sequence belongs to the prokaryotic AdoMetDC family. Type 1 subfamily. In terms of assembly, heterotetramer of two alpha and two beta chains arranged as a dimer of alpha/beta heterodimers. Pyruvate is required as a cofactor. In terms of processing, is synthesized initially as an inactive proenzyme. Formation of the active enzyme involves a self-maturation process in which the active site pyruvoyl group is generated from an internal serine residue via an autocatalytic post-translational modification. Two non-identical subunits are generated from the proenzyme in this reaction, and the pyruvate is formed at the N-terminus of the alpha chain, which is derived from the carboxyl end of the proenzyme. The post-translation cleavage follows an unusual pathway, termed non-hydrolytic serinolysis, in which the side chain hydroxyl group of the serine supplies its oxygen atom to form the C-terminus of the beta chain, while the remainder of the serine residue undergoes an oxidative deamination to produce ammonia and the pyruvoyl group blocking the N-terminus of the alpha chain.

The enzyme catalyses S-adenosyl-L-methionine + H(+) = S-adenosyl 3-(methylsulfanyl)propylamine + CO2. The protein operates within amine and polyamine biosynthesis; S-adenosylmethioninamine biosynthesis; S-adenosylmethioninamine from S-adenosyl-L-methionine: step 1/1. Catalyzes the decarboxylation of S-adenosylmethionine to S-adenosylmethioninamine (dcAdoMet), the propylamine donor required for the synthesis of the polyamines spermine and spermidine from the diamine putrescine. This chain is S-adenosylmethionine decarboxylase proenzyme, found in Thermococcus gammatolerans (strain DSM 15229 / JCM 11827 / EJ3).